Consider the following 216-residue polypeptide: Thiamine-phosphate synthase (216 aa).

Residues 41-45 (QLREK) and aspartate 77 contribute to the 4-amino-2-methyl-5-(diphosphooxymethyl)pyrimidine site. Mg(2+) is bound by residues aspartate 78 and aspartate 97. Serine 116 lines the 4-amino-2-methyl-5-(diphosphooxymethyl)pyrimidine pocket. Position 143 to 145 (143 to 145 (TTS)) interacts with 2-[(2R,5Z)-2-carboxy-4-methylthiazol-5(2H)-ylidene]ethyl phosphate. 4-amino-2-methyl-5-(diphosphooxymethyl)pyrimidine is bound at residue lysine 146. Residues glycine 174 and 194–195 (IS) contribute to the 2-[(2R,5Z)-2-carboxy-4-methylthiazol-5(2H)-ylidene]ethyl phosphate site.

This sequence belongs to the thiamine-phosphate synthase family. Mg(2+) is required as a cofactor.

It catalyses the reaction 2-[(2R,5Z)-2-carboxy-4-methylthiazol-5(2H)-ylidene]ethyl phosphate + 4-amino-2-methyl-5-(diphosphooxymethyl)pyrimidine + 2 H(+) = thiamine phosphate + CO2 + diphosphate. The catalysed reaction is 2-(2-carboxy-4-methylthiazol-5-yl)ethyl phosphate + 4-amino-2-methyl-5-(diphosphooxymethyl)pyrimidine + 2 H(+) = thiamine phosphate + CO2 + diphosphate. The enzyme catalyses 4-methyl-5-(2-phosphooxyethyl)-thiazole + 4-amino-2-methyl-5-(diphosphooxymethyl)pyrimidine + H(+) = thiamine phosphate + diphosphate. It participates in cofactor biosynthesis; thiamine diphosphate biosynthesis; thiamine phosphate from 4-amino-2-methyl-5-diphosphomethylpyrimidine and 4-methyl-5-(2-phosphoethyl)-thiazole: step 1/1. Its function is as follows. Condenses 4-methyl-5-(beta-hydroxyethyl)thiazole monophosphate (THZ-P) and 2-methyl-4-amino-5-hydroxymethyl pyrimidine pyrophosphate (HMP-PP) to form thiamine monophosphate (TMP). The sequence is that of Thiamine-phosphate synthase from Pediococcus pentosaceus (strain ATCC 25745 / CCUG 21536 / LMG 10740 / 183-1w).